A 186-amino-acid polypeptide reads, in one-letter code: ATP synthase subunit delta (186 aa).

This sequence belongs to the ATPase delta chain family. As to quaternary structure, F-type ATPases have 2 components, F(1) - the catalytic core - and F(0) - the membrane proton channel. F(1) has five subunits: alpha(3), beta(3), gamma(1), delta(1), epsilon(1). F(0) has three main subunits: a(1), b(2) and c(10-14). The alpha and beta chains form an alternating ring which encloses part of the gamma chain. F(1) is attached to F(0) by a central stalk formed by the gamma and epsilon chains, while a peripheral stalk is formed by the delta and b chains.

It is found in the cell inner membrane. Functionally, f(1)F(0) ATP synthase produces ATP from ADP in the presence of a proton or sodium gradient. F-type ATPases consist of two structural domains, F(1) containing the extramembraneous catalytic core and F(0) containing the membrane proton channel, linked together by a central stalk and a peripheral stalk. During catalysis, ATP synthesis in the catalytic domain of F(1) is coupled via a rotary mechanism of the central stalk subunits to proton translocation. Its function is as follows. This protein is part of the stalk that links CF(0) to CF(1). It either transmits conformational changes from CF(0) to CF(1) or is implicated in proton conduction. The polypeptide is ATP synthase subunit delta (Brucella melitensis biotype 2 (strain ATCC 23457)).